A 205-amino-acid polypeptide reads, in one-letter code: Ribonuclease HII (205 aa).

Positions 16–205 (VSEVGIDEVG…KSFLKKSKLI (190 aa)) constitute an RNase H type-2 domain. The a divalent metal cation site is built by D22, E23, and D118.

This sequence belongs to the RNase HII family. Requires Mn(2+) as cofactor. Mg(2+) is required as a cofactor.

The protein localises to the cytoplasm. It catalyses the reaction Endonucleolytic cleavage to 5'-phosphomonoester.. Functionally, endonuclease that specifically degrades the RNA of RNA-DNA hybrids. This chain is Ribonuclease HII, found in Prochlorococcus marinus (strain AS9601).